A 250-amino-acid polypeptide reads, in one-letter code: 5-oxoprolinase subunit A (250 aa).

Belongs to the LamB/PxpA family. In terms of assembly, forms a complex composed of PxpA, PxpB and PxpC.

It catalyses the reaction 5-oxo-L-proline + ATP + 2 H2O = L-glutamate + ADP + phosphate + H(+). Its function is as follows. Catalyzes the cleavage of 5-oxoproline to form L-glutamate coupled to the hydrolysis of ATP to ADP and inorganic phosphate. The protein is 5-oxoprolinase subunit A of Staphylococcus aureus (strain Mu3 / ATCC 700698).